A 337-amino-acid polypeptide reads, in one-letter code: Phenylpyruvate C(3)-methyltransferase (337 aa).

It belongs to the methyltransferase superfamily.

It carries out the reaction 3-phenylpyruvate + S-adenosyl-L-methionine = (3S)-2-oxo-3-phenylbutanoate + S-adenosyl-L-homocysteine + H(+). It participates in antibiotic biosynthesis. Its function is as follows. S-adenosyl-L-methionine-dependent methyltransferase involved in synthesis of the nonproteinogenic amino acid (2S,3S)-beta-methyl-phenylalanine, a building block of the antibiotic mannopeptimycin. This chain is Phenylpyruvate C(3)-methyltransferase (mppJ), found in Streptomyces hygroscopicus.